The sequence spans 272 residues: Tryptophan synthase alpha chain (272 aa).

Active-site proton acceptor residues include glutamate 49 and aspartate 60.

The protein belongs to the TrpA family. In terms of assembly, tetramer of two alpha and two beta chains.

It carries out the reaction (1S,2R)-1-C-(indol-3-yl)glycerol 3-phosphate + L-serine = D-glyceraldehyde 3-phosphate + L-tryptophan + H2O. It participates in amino-acid biosynthesis; L-tryptophan biosynthesis; L-tryptophan from chorismate: step 5/5. Its function is as follows. The alpha subunit is responsible for the aldol cleavage of indoleglycerol phosphate to indole and glyceraldehyde 3-phosphate. The chain is Tryptophan synthase alpha chain from Polaromonas sp. (strain JS666 / ATCC BAA-500).